A 378-amino-acid polypeptide reads, in one-letter code: UPF0754 membrane protein BALH_0780 (378 aa).

Transmembrane regions (helical) follow at residues 1-21 (MNIW…GGFT) and 357-377 (YLGA…LLFL).

This sequence belongs to the UPF0754 family.

It is found in the cell membrane. This Bacillus thuringiensis (strain Al Hakam) protein is UPF0754 membrane protein BALH_0780.